A 169-amino-acid polypeptide reads, in one-letter code: Hydroperoxy fatty acid reductase gpx1 (169 aa).

Residue Cys41 is part of the active site.

The protein belongs to the glutathione peroxidase family. In terms of assembly, monomer.

The enzyme catalyses a hydroperoxy polyunsaturated fatty acid + NADPH + H(+) = a hydroxy polyunsaturated fatty acid + NADP(+) + H2O. Mercaptosuccinate, pCMB, and nethylmaleimide act as inhibitors of the catalytic activity. Its function is as follows. Hydroperoxy fatty acid reductase essential for the removal of lipid hydroperoxides under normal and stress conditions, leading to the protection of membrane integrity. The protein is Hydroperoxy fatty acid reductase gpx1 (gpx1) of Synechocystis sp. (strain ATCC 27184 / PCC 6803 / Kazusa).